The sequence spans 290 residues: Expansin-A26 (290 aa).

Residues 1–29 (MDTTTTMAPLPLLTTTSLLLFFFLASSFA) form the signal peptide. The segment at 45 to 67 (DGGGDGEGGGGGDGEGGGGGGGA) is disordered. The 96-residue stretch at 101–196 (GGACGYKDAD…RKVACVRQGG (96 aa)) folds into the Expansin-like EG45 domain. One can recognise an Expansin-like CBD domain in the interval 206 to 286 (SYNMVMVKNV…DWTYDNTYQA (81 aa)). Residue Asn-250 is glycosylated (N-linked (GlcNAc...) asparagine).

It belongs to the expansin family. Expansin A subfamily. As to expression, expressed in flowers.

The protein resides in the secreted. It is found in the cell wall. It localises to the membrane. Functionally, may cause loosening and extension of plant cell walls by disrupting non-covalent bonding between cellulose microfibrils and matrix glucans. No enzymatic activity has been found. May be required for rapid internodal elongation in deepwater rice during submergence. In Oryza sativa subsp. japonica (Rice), this protein is Expansin-A26 (EXPA26).